The chain runs to 165 residues: Nucleotide-binding protein Pro_0479 (165 aa).

This sequence belongs to the YajQ family.

Its function is as follows. Nucleotide-binding protein. This is Nucleotide-binding protein Pro_0479 from Prochlorococcus marinus (strain SARG / CCMP1375 / SS120).